A 529-amino-acid chain; its full sequence is Keratin, type II cytoskeletal 74 (529 aa).

The interval 1–139 is head; it reads MSRQLNIKSS…DPEIQKVRAQ (139 aa). Residues 140 to 175 are coil 1A; the sequence is EREQIKVLNDKFASFIDKVRFLEQQNQVLETKWELL. The IF rod domain maps to 140-453; the sequence is EREQIKVLND…KLLEGEECRM (314 aa). Residues 176 to 194 are linker 1; that stretch reads QQLDLNNCKKNLEPILEGY. The interval 195 to 286 is coil 1B; sequence ISNLRKQLET…CLYDAEIAQI (92 aa). Residues 287-310 form a linker 12 region; the sequence is QTHASETSVILSMDNNRDLDLDSI. A coil 2 region spans residues 311-449; that stretch reads IAEVRMHYEE…ATYRKLLEGE (139 aa). Residues 450-529 are tail; it reads ECRMSGENPS…ASIPARKATR (80 aa). The segment covering 484 to 500 has biased composition (low complexity); sequence GASAVAGSSGSTQSGQT. The disordered stretch occupies residues 484 to 529; the sequence is GASAVAGSSGSTQSGQTKTTEARGGDLKDTQGKSTPASIPARKATR. Residues 503-514 are compositionally biased toward basic and acidic residues; that stretch reads TEARGGDLKDTQ. Thr-513 is subject to Phosphothreonine.

The protein belongs to the intermediate filament family. In terms of assembly, heterotetramer of two type I and two type II keratins. In terms of tissue distribution, highly expressed in hair follicles from scalp. In hair, it is specifically present in the inner root sheath (IRS) of the hair follicle. Present in the IRS Huxley layer, but not in Henle layer or cuticle of the IRS. In the IRS Huxley layer, it is expressed in specialized Huxley cells, termed 'Fluegelzellen, along the area of differentiated Henle cells (at protein level).

Has a role in hair formation. Specific component of keratin intermediate filaments in the inner root sheath (IRS) of the hair follicle. In Homo sapiens (Human), this protein is Keratin, type II cytoskeletal 74 (KRT74).